The primary structure comprises 135 residues: uncharacterized protein (135 aa).

Residues 25–123 (CPIQHVVDLL…LGSDWLEQES (99 aa)) enclose the HTH hxlR-type domain.

This is an uncharacterized protein from Synechocystis sp. (strain ATCC 27184 / PCC 6803 / Kazusa).